A 91-amino-acid chain; its full sequence is ATP synthase subunit c (91 aa).

The next 2 helical transmembrane spans lie at 4–24 (FTMCVLAAGIGMALGTLGTGI) and 53–73 (IGLAMIESLAIYALVVCLIIL).

This sequence belongs to the ATPase C chain family. F-type ATPases have 2 components, F(1) - the catalytic core - and F(0) - the membrane proton channel. F(1) has five subunits: alpha(3), beta(3), gamma(1), delta(1), epsilon(1). F(0) has three main subunits: a(1), b(2) and c(10-14). The alpha and beta chains form an alternating ring which encloses part of the gamma chain. F(1) is attached to F(0) by a central stalk formed by the gamma and epsilon chains, while a peripheral stalk is formed by the delta and b chains.

The protein resides in the cell inner membrane. F(1)F(0) ATP synthase produces ATP from ADP in the presence of a proton or sodium gradient. F-type ATPases consist of two structural domains, F(1) containing the extramembraneous catalytic core and F(0) containing the membrane proton channel, linked together by a central stalk and a peripheral stalk. During catalysis, ATP synthesis in the catalytic domain of F(1) is coupled via a rotary mechanism of the central stalk subunits to proton translocation. Functionally, key component of the F(0) channel; it plays a direct role in translocation across the membrane. A homomeric c-ring of between 10-14 subunits forms the central stalk rotor element with the F(1) delta and epsilon subunits. This is ATP synthase subunit c from Geotalea uraniireducens (strain Rf4) (Geobacter uraniireducens).